We begin with the raw amino-acid sequence, 319 residues long: tRNA U34 carboxymethyltransferase (319 aa).

Carboxy-S-adenosyl-L-methionine contacts are provided by residues Lys88, Trp102, Lys107, Gly126, 176–177 (LE), Met192, Tyr196, and Arg311.

It belongs to the class I-like SAM-binding methyltransferase superfamily. CmoB family. Homotetramer.

The enzyme catalyses carboxy-S-adenosyl-L-methionine + 5-hydroxyuridine(34) in tRNA = 5-carboxymethoxyuridine(34) in tRNA + S-adenosyl-L-homocysteine + H(+). Catalyzes carboxymethyl transfer from carboxy-S-adenosyl-L-methionine (Cx-SAM) to 5-hydroxyuridine (ho5U) to form 5-carboxymethoxyuridine (cmo5U) at position 34 in tRNAs. The polypeptide is tRNA U34 carboxymethyltransferase (Pseudomonas syringae pv. syringae (strain B728a)).